Reading from the N-terminus, the 89-residue chain is Repressor protein (89 aa).

The H-T-H motif DNA-binding region spans 29 to 52 (SGDIARNTGYSRRRISDRCTVLVD).

Its function is as follows. Transcriptional repressor expressed under lysogenic conditions, which specifically binds the host DNA site 'RRGAAG'. The binding occurs cooperatively, probably as 2 copies of a dimer. Possibly prevents RNA polymerase access to the promoters for lytic cell cycle transcription. The sequence is that of Repressor protein (T6) from Halobacterium salinarum (Halobacterium halobium).